The following is a 1524-amino-acid chain: Protein dispatched homolog 1 (1524 aa).

Asn-59 is a glycosylation site (N-linked (GlcNAc...) asparagine). A run of 4 helical transmembrane segments spans residues 190–210, 500–520, 525–545, and 549–569; these read VVVL…GVLV, LLMD…VMCV, MFIT…SYFL, and VFHF…LVGI. The SSD domain maps to 486–658; that stretch reads GIEFGIKHSL…VTWLPAVVVL (173 aa). An N-linked (GlcNAc...) asparagine glycan is attached at Asn-582. The next 8 membrane-spanning stretches (helical) occupy residues 604-624, 638-658, 719-739, 988-1008, 1010-1030, 1040-1060, 1079-1099, and 1107-1127; these read AALS…ANYV, GTAI…VVVL, YLWL…VCIN, MGLS…NIII, LYAI…LVLL, VTIS…GVAY, VGSA…MMMP, and QLGT…TFFF.

This sequence belongs to the dispatched family. As to quaternary structure, interacts with SHH via the cholesterol anchor of the dually lipid-modified SHH (ShhNp).

The protein resides in the membrane. Its function is as follows. Functions in hedgehog (Hh) signaling. Regulates the release and extracellular accumulation of cholesterol-modified hedgehog proteins and is hence required for effective production of the Hh signal. Synergizes with SCUBE2 to cause an increase in SHH secretion. This chain is Protein dispatched homolog 1 (DISP1), found in Homo sapiens (Human).